Consider the following 355-residue polypeptide: Anthranilate phosphoribosyltransferase (355 aa).

5-phospho-alpha-D-ribose 1-diphosphate is bound by residues Gly91, 94–95 (GD), Thr99, 101–104 (NIST), 119–127 (KHGNRAMSS), and Ala131. Gly91 provides a ligand contact to anthranilate. Position 103 (Ser103) interacts with Mg(2+). Asn122 serves as a coordination point for anthranilate. An anthranilate-binding site is contributed by Arg177. The Mg(2+) site is built by Asp234 and Glu235.

It belongs to the anthranilate phosphoribosyltransferase family. In terms of assembly, homodimer. Mg(2+) is required as a cofactor.

The catalysed reaction is N-(5-phospho-beta-D-ribosyl)anthranilate + diphosphate = 5-phospho-alpha-D-ribose 1-diphosphate + anthranilate. It participates in amino-acid biosynthesis; L-tryptophan biosynthesis; L-tryptophan from chorismate: step 2/5. Its function is as follows. Participates in the tryptophan-dependent indole-3-acetic acid production, which is a phytohormone released by A.brasilense. Catalyzes the transfer of the phosphoribosyl group of 5-phosphorylribose-1-pyrophosphate (PRPP) to anthranilate to yield N-(5'-phosphoribosyl)-anthranilate (PRA). This is Anthranilate phosphoribosyltransferase from Azospirillum brasilense.